The following is a 267-amino-acid chain: 4-hydroxy-tetrahydrodipicolinate reductase (267 aa).

Residues 9-14 (GASGRM) and Asp35 each bind NAD(+). An NADP(+)-binding site is contributed by Arg36. Residues 98 to 100 (GTT) and 122 to 125 (ASNF) contribute to the NAD(+) site. His155 acts as the Proton donor/acceptor in catalysis. (S)-2,3,4,5-tetrahydrodipicolinate is bound at residue His156. The Proton donor role is filled by Lys159. Residue 165–166 (GT) participates in (S)-2,3,4,5-tetrahydrodipicolinate binding.

Belongs to the DapB family.

It is found in the cytoplasm. The catalysed reaction is (S)-2,3,4,5-tetrahydrodipicolinate + NAD(+) + H2O = (2S,4S)-4-hydroxy-2,3,4,5-tetrahydrodipicolinate + NADH + H(+). The enzyme catalyses (S)-2,3,4,5-tetrahydrodipicolinate + NADP(+) + H2O = (2S,4S)-4-hydroxy-2,3,4,5-tetrahydrodipicolinate + NADPH + H(+). It functions in the pathway amino-acid biosynthesis; L-lysine biosynthesis via DAP pathway; (S)-tetrahydrodipicolinate from L-aspartate: step 4/4. Its function is as follows. Catalyzes the conversion of 4-hydroxy-tetrahydrodipicolinate (HTPA) to tetrahydrodipicolinate. The protein is 4-hydroxy-tetrahydrodipicolinate reductase of Chromobacterium violaceum (strain ATCC 12472 / DSM 30191 / JCM 1249 / CCUG 213 / NBRC 12614 / NCIMB 9131 / NCTC 9757 / MK).